A 187-amino-acid polypeptide reads, in one-letter code: Putative adenylate kinase (187 aa).

ATP contacts are provided by glycine 10, glycine 12, lysine 13, threonine 14, and isoleucine 15. Residues 30–53 form an NMP region; that stretch reads SLSQFVIENKLYTEYDELRQSYII. Positions 103–113 are LID; that stretch reads GRGWADIKVAE. Arginine 104 serves as a coordination point for ATP.

Belongs to the adenylate kinase family. AK6 subfamily. In terms of assembly, interacts with uS11. Not a structural component of 40S pre-ribosomes, but transiently interacts with them by binding to uS11.

It catalyses the reaction AMP + ATP = 2 ADP. The enzyme catalyses ATP + H2O = ADP + phosphate + H(+). Functionally, broad-specificity nucleoside monophosphate (NMP) kinase that catalyzes the reversible transfer of the terminal phosphate group between nucleoside triphosphates and monophosphates. Also has ATPase activity. Involved in the late maturation steps of the 30S ribosomal particles, specifically 16S rRNA maturation. While NMP activity is not required for ribosome maturation, ATPase activity is. Associates transiently with small ribosomal subunit protein uS11. ATP hydrolysis breaks the interaction with uS11. May temporarily remove uS11 from the ribosome to enable a conformational change of the ribosomal RNA that is needed for the final maturation step of the small ribosomal subunit. The polypeptide is Putative adenylate kinase (Saccharolobus islandicus (strain L.S.2.15 / Lassen #1) (Sulfolobus islandicus)).